We begin with the raw amino-acid sequence, 284 residues long: Stomatin (284 aa).

Over 1 to 31 (MSDKRQSSHVQSQRIPESFRENSKTELGACG) the chain is Cytoplasmic. Position 18 is a phosphoserine (Ser-18). Cys-30 carries S-palmitoyl cysteine lipidation. Residues 32-52 (WILVAASFFFVIITFPISIWI) lie within the membrane without spanning it. Residues 53 to 284 (CIKIVKEYER…MLQGIMGSNH (232 aa)) lie on the Cytoplasmic side of the membrane. The S-palmitoyl cysteine moiety is linked to residue Cys-87. Phosphoserine occurs at positions 161 and 244. The interval 265–273 (STIVFPLPV) is required for homooligomerization. Residues 267 to 269 (IVF) are required for lipid raft association. The interaction with LANCL1 stretch occupies residues 273-284 (VDMLQGIMGSNH).

Belongs to the band 7/mec-2 family. In terms of assembly, interacts with LANCL1. Interacts with SLC2A1. Interacts with SLC4A1; this interaction positively regulates SLC4A1 activity. Identified in large complexes with SLC40A1, SLC14A1, SLC29A1 and AQP1. Homodimer and higher order homooligomers. The homodimer is banana-shaped. Interacts with ASIC1, ASIC2 and ASIC3. Interacts with STOML1; may redistribute STOM from the plasma membrane to late endosomes. In terms of tissue distribution, expressed in all sensory neurons of the dorsal root ganglia. In the CNS, expressed in many neurons of the spinal cord, medulla and pons. Expressed only in scattered neurons in the cortex, hippocampus, thalamus and basal ganglia. In the cerebellum, expressed in all Purkinje cells (at protein level). Widely expressed with high levels in heart, liver, skeletal muscle and testis and low levels in lung, brain and spleen.

The protein localises to the cell membrane. It is found in the cytoplasm. The protein resides in the cytoskeleton. It localises to the membrane raft. Its subcellular location is the melanosome. The protein localises to the cytoplasmic vesicle. In terms of biological role, regulates ion channel activity and transmembrane ion transport. Regulates ASIC2 and ASIC3 channel activity. In Mus musculus (Mouse), this protein is Stomatin.